A 571-amino-acid chain; its full sequence is NADH-quinone oxidoreductase subunit C/D (571 aa).

Residues 1 to 171 (MQASEKTLNE…NLSNTMNYRR (171 aa)) are NADH dehydrogenase I subunit C. The tract at residues 194–571 (AQVVLNWGPL…LDPVVGEVDR (378 aa)) is NADH dehydrogenase I subunit D.

It in the N-terminal section; belongs to the complex I 30 kDa subunit family. The protein in the C-terminal section; belongs to the complex I 49 kDa subunit family. NDH-1 is composed of 13 different subunits. Subunits NuoB, CD, E, F, and G constitute the peripheral sector of the complex.

It localises to the cell inner membrane. The enzyme catalyses a quinone + NADH + 5 H(+)(in) = a quinol + NAD(+) + 4 H(+)(out). Its function is as follows. NDH-1 shuttles electrons from NADH, via FMN and iron-sulfur (Fe-S) centers, to quinones in the respiratory chain. The immediate electron acceptor for the enzyme in this species is believed to be ubiquinone. Couples the redox reaction to proton translocation (for every two electrons transferred, four hydrogen ions are translocated across the cytoplasmic membrane), and thus conserves the redox energy in a proton gradient. The polypeptide is NADH-quinone oxidoreductase subunit C/D (nuoC) (Hydrogenobaculum sp. (strain Y04AAS1)).